Reading from the N-terminus, the 235-residue chain is Protein GrpE (235 aa).

Over residues 1-18 (MTDGNQKPDGNSGEQVTV) the composition is skewed to polar residues. Disordered stretches follow at residues 1 to 50 (MTDG…DAAH) and 198 to 235 (ESVD…PSGS). The span at 19 to 35 (TDKRRIDPETGEVRHVP) shows a compositional bias: basic and acidic residues.

It belongs to the GrpE family. Homodimer.

The protein localises to the cytoplasm. Participates actively in the response to hyperosmotic and heat shock by preventing the aggregation of stress-denatured proteins, in association with DnaK and GrpE. It is the nucleotide exchange factor for DnaK and may function as a thermosensor. Unfolded proteins bind initially to DnaJ; upon interaction with the DnaJ-bound protein, DnaK hydrolyzes its bound ATP, resulting in the formation of a stable complex. GrpE releases ADP from DnaK; ATP binding to DnaK triggers the release of the substrate protein, thus completing the reaction cycle. Several rounds of ATP-dependent interactions between DnaJ, DnaK and GrpE are required for fully efficient folding. The sequence is that of Protein GrpE from Mycobacterium bovis (strain BCG / Pasteur 1173P2).